The chain runs to 953 residues: Vacuolar membrane protease (953 aa).

Over 1–16 the chain is Cytoplasmic; that stretch reads MDQTKPPRRNPLAFTP. The helical transmembrane segment at 17 to 37 threads the bilayer; it reads WPVTLITAVVYLAFVIPLLVI. At 38-382 the chain is on the vacuolar side; it reads HHVVPSAPTS…TFVLFRLHTL (345 aa). Residues N53 and N115 are each glycosylated (N-linked (GlcNAc...) asparagine). H165 and D177 together coordinate Zn(2+). E211 serves as the catalytic Proton acceptor. E212, E237, and H310 together coordinate Zn(2+). Residues 383-403 traverse the membrane as a helical segment; that stretch reads FALSVTLLVVAPIVLLLTSII. At 404-437 the chain is on the cytoplasmic side; sequence LTKVDKMYLFRTSIRPEGSLEVLPLYGDRGVIRY. The chain crosses the membrane as a helical span at residues 438 to 458; that stretch reads PFLLGIPTAVTIGLAYLLTKF. The Vacuolar portion of the chain corresponds to 459–464; sequence NPYIVH. A helical transmembrane segment spans residues 465–485; the sequence is SSQYAVWSMMVSVWIFLAWFV. The Cytoplasmic portion of the chain corresponds to 486 to 499; sequence SRVADFARPSAFHR. The helical transmembrane segment at 500-520 threads the bilayer; the sequence is VYTLTWTFVVMWVLQVIATVY. The Vacuolar portion of the chain corresponds to 521–524; it reads QDRW. A helical membrane pass occupies residues 525-545; sequence ALGGSYFIFFAYAGTFLATWI. Residues 546–650 are Cytoplasmic-facing; that stretch reads SYLELFALPR…SLPKWLWLLQ (105 aa). The segment at 570 to 599 is disordered; it reads ASSHSSRRGLSEEDEEDEDEAPTESTSLLG. The span at 581–591 shows a compositional bias: acidic residues; the sequence is EEDEEDEDEAP. Residues 651 to 671 form a helical membrane-spanning segment; that stretch reads FLLAAPIVLILVGPIALLLTG. Over 672 to 684 the chain is Vacuolar; that stretch reads SLHQTGQDGSSSL. A helical transmembrane segment spans residues 685–705; that stretch reads FIYIAIVALTTLLLSPMLPFV. Over 706–711 the chain is Cytoplasmic; it reads HRCTYH. A helical transmembrane segment spans residues 712–732; sequence IPLFMLAVFAGTLIYNLVAFP. Over 733–953 the chain is Vacuolar; that stretch reads FSDSNRLKLF…VEGRKSFEIA (221 aa). A glycan (N-linked (GlcNAc...) asparagine) is linked at N779.

This sequence belongs to the peptidase M28 family. It depends on Zn(2+) as a cofactor.

It localises to the vacuole membrane. In terms of biological role, may be involved in vacuolar sorting and osmoregulation. The sequence is that of Vacuolar membrane protease from Emericella nidulans (strain FGSC A4 / ATCC 38163 / CBS 112.46 / NRRL 194 / M139) (Aspergillus nidulans).